The following is a 479-amino-acid chain: Adenosylhomocysteinase (479 aa).

Residues Thr65, Asp145, and Glu205 each coordinate substrate. Residue 206–208 (TTT) participates in NAD(+) binding. Residues Lys235 and Asp239 each coordinate substrate. Residues Asn240, 269–274 (GYGDVG), Glu292, Asn327, 348–350 (IGH), and Asn393 each bind NAD(+).

The protein belongs to the adenosylhomocysteinase family. The cofactor is NAD(+).

It localises to the cytoplasm. It carries out the reaction S-adenosyl-L-homocysteine + H2O = L-homocysteine + adenosine. Its pathway is amino-acid biosynthesis; L-homocysteine biosynthesis; L-homocysteine from S-adenosyl-L-homocysteine: step 1/1. Its function is as follows. May play a key role in the regulation of the intracellular concentration of adenosylhomocysteine. This Herminiimonas arsenicoxydans protein is Adenosylhomocysteinase.